Reading from the N-terminus, the 1469-residue chain is Protein BCL9 homolog (1469 aa).

The span at 1-16 (MLSTTMPRSPTQQQPQ) shows a compositional bias: polar residues. 5 disordered regions span residues 1-131 (MLST…NVSA), 161-187 (SNKAKGQAAGGGCETGSTSSLTVKEEP), 200-222 (EERENHSPTMSPVGFGSIGNAQD), 422-442 (ENSKRSTVSAPSNSFVDQSDP), and 454-474 (GGSSNTSRSGQNSRNHVDSIS). S9 carries the phosphoserine modification. T11 carries the post-translational modification Phosphothreonine. The span at 17 to 34 (PNSDASSTSASGSNPGAA) shows a compositional bias: low complexity. Composition is skewed to polar residues over residues 40-60 (SAASRSSPKTLNSEPFSTLSP) and 90-113 (SGNNLPEGQTMLRQNSTSTINSCL). Positions 116–130 (SPQNSSEHSNSSNVS) are enriched in low complexity. S206 bears the Phosphoserine mark. Position 208 is a phosphothreonine (T208). Residue S210 is modified to Phosphoserine. 2 stretches are compositionally biased toward polar residues: residues 422–438 (ENSKRSTVSAPSNSFVD) and 455–474 (GSSNTSRSGQNSRNHVDSIS). Residues 511 to 555 (SLQGVKVPDENLTPQQRQHREEQLAKIKKMNQFLFPENENSVGAN) form an ARM-binding region. Disordered regions lie at residues 728-830 (GGKP…TSTV), 844-913 (CFQA…RSPV), and 961-991 (QASAQGGSVQFSRRSDNIPLNPNSGNRPPPN). Over residues 731–745 (PRQVTGTVVPQQQTP) the composition is skewed to low complexity. The span at 770–781 (IQRSASVPIATQ) shows a compositional bias: polar residues. Over residues 782 to 796 (SPNPSSPNNLSLPSP) the composition is skewed to low complexity. Polar residues-rich tracts occupy residues 806-830 (PTNSPSMDGTGSLSGSVPQANTSTV) and 844-880 (CFQADTPSPSNQNRSRNTGSSSVLTHNLSSNPSTPLS). Residues S883, S905, and S911 each carry the phosphoserine modification. Residues 904–913 (PSPQGQRSPV) show a composition bias toward polar residues.

It belongs to the BCL9 family. As to quaternary structure, binds to ARM and PYGO.

It is found in the nucleus. Functionally, involved in signal transduction through the Wnt pathway. In Drosophila melanogaster (Fruit fly), this protein is Protein BCL9 homolog (lgs).